A 395-amino-acid polypeptide reads, in one-letter code: FAD-dependent monooxygenase cctM (395 aa).

The signal sequence occupies residues 1-23; sequence MEPGTDVRRVLVIGAGAAGLLIA. E37, G52, and R112 together coordinate FAD. N-linked (GlcNAc...) asparagine glycans are attached at residues N138 and N298. Position 306 (D306) interacts with FAD.

It belongs to the paxM FAD-dependent monooxygenase family. Requires FAD as cofactor.

It participates in mycotoxin biosynthesis. In terms of biological role, FAD-dependent monooxygenase; part of the gene cluster that mediates the biosynthesis of the mycotoxin cyclochlorotine, a hepatotoxic and carcinogenic cyclic chlorinated pentapeptide. The function of cctM within the pathway, if any, remains undetermined. The NRPS cctN initially catalyzes the condensation of L-serine (Ser), Pro, L-2-aminobutyrate (2Abu), Ser, and beta-Phe in this order to produce isocyclotine. After the dichlorination of Pro2 catalyzed by cctP2 to produce isocyclochlorotine, the cctO-mediated transacylation of isocyclochlorotine can furnish cyclochlorotine. The subsequent hydroxylation of cyclochlorotine by cctR yields hydroxycyclochlorotine as the final product. CctP1 probably acts as a phenylalanine aminomutase and provides the uncommon building block beta-Phe. Furthermore, 2Abu can be synthesized from threonine by one of the threonine dehydratases and transaminases localized outside of the cluster. The functions of the remaining proteins encoded by the cluster, cctM and cctT, have not been identified yet. This is FAD-dependent monooxygenase cctM from Talaromyces islandicus (Penicillium islandicum).